Consider the following 525-residue polypeptide: Peptide chain release factor 3 (525 aa).

A tr-type G domain is found at 11-279 (NKRRTFAIIS…TYLQFAPAPS (269 aa)). GTP is bound by residues 20 to 27 (SHPDAGKT), 88 to 92 (DTPGH), and 142 to 145 (NKFD).

The protein belongs to the TRAFAC class translation factor GTPase superfamily. Classic translation factor GTPase family. PrfC subfamily.

It is found in the cytoplasm. Functionally, increases the formation of ribosomal termination complexes and stimulates activities of RF-1 and RF-2. It binds guanine nucleotides and has strong preference for UGA stop codons. It may interact directly with the ribosome. The stimulation of RF-1 and RF-2 is significantly reduced by GTP and GDP, but not by GMP. This is Peptide chain release factor 3 from Limosilactobacillus reuteri (strain DSM 20016) (Lactobacillus reuteri).